The sequence spans 1962 residues: MPKPVANQEDEDPTPYLFVSLEQRRIDQSKPYDSKKSCWIPDEKEGYLLGEIKATKGDIVSVGLQGGEVRDIKSEKVEKVNPPKFEKIEDMADMTVLNTPCVLHNLRQRYYAKLIYTYSGLFCVAINPYKRYPVYTNRCAKMYRGKRRNEVPPHIFAISDGAYVDMLTNHVNQSMLITGESGAGKTENTKKVIAYFATVGASKKTDEAAKSKGSLEDQVVQTNPVLEAFGNAKTVRNDNSSRFGKFIRIHFGPTGKLAGADIETYLLEKARVISQQSLERSYHIFYQIMSGSVPGVKDICLLTDNIYDYHIVSQGKVTVASIDDAEEFSLTDQAFDILGFTKQEKEDVYRITAAVMHMGGMKFKQRGREEQAEQDGEEEGGRVSKLFGCDTAELYKNLLKPRIKVGNEFVTQGRNVQQVTNSIGALCKGVFDRLFKWLVKKCNETLDTQQKRQHFIGVLDIAGFEIFEYNGFEQLCINFTNEKLQQFFNHIMFVMEQEEYKKEGINWDFIDFGMDLLACIDLIEKPMGILSILEEESMFPKATDQTFSEKLTNTHLGKSAPFQKPKPPKPGQQAAHFAIAHYAGCVSYNITGWLEKNKDPLNDTVVDQFKKSQNKLLIEIFADHAGQSGGGEQAKGGRGKKGGGFATVSSAYKEQLNSLMTTLRSTQPHFVRCIIPNEMKQPGVVDAHLVMHQLTCNGVLEGIRICRKGFPNRMMYPDFKMRYQILNPRGIKDLDCPKKASKVLIESTELNEDLYRLGHTKVFFRAGVLGQMEEFRDERLGKIMSWMQAWARGYLSRKGFKKLQEQRVALKVVQRNLRKYLQLRTWPWYKLWQKVKPLLNVSRIEDEIARLEEKAKKAEELHAAEVKVRKELEALNAKLLAEKTALLDSLSGEKGALQDYQERNAKLTAQKNDLENQLRDIQERLTQEEDARNQLFQQKKKADQEISGLKKDIEDLELNVQKAEQDKATKDHQIRNLNDEIAHQDELINKLNKEKKMQGETNQKTGEELQAAEDKINHLNKVKAKLEQTLDELEDSLEREKKVRGDVEKSKRKVEGDLKLTQEAVADLERNKKELEQTIQRKDKELSSITAKLEDEQVVVLKHQRQIKELQARIEELEEEVEAERQARAKAEKQRADLARELEELGERLEEAGGATSAQIELNKKREAELSKLRRDLEEANIQHESTLANLRKKHNDAVAEMAEQVDQLNKLKAKAEHDRQTCHNELNQTRTACDQLGRDKAAQEKIAKQLQHTLNEVQSKLDETNRTLNDFDASKKKLSIENSDLLRQLEEAESQVSQLSKIKISLTTQLEDTKRLADEESRERATLLGKFRNLEHDLDNLREQVEEEAEGKADLQRQLSKANAEAQVWRSKYESDGVARSEELEEAKRKLQARLAEAEETIESLNQKCIGLEKTKQRLSTEVEDLQLEVDRANAIANAAEKKQKAFDKIIGEWKLKVDDLAAELDASQKECRNYSTELFRLKGAYEEGQEQLEAVRRENKNLADEVKDLLDQIGEGGRNIHEIEKARKRLEAEKDELQAALEEAEAALEQEENKVLRAQLELSQVRQEIDRRIQEKEEEFENTRKNHQRALDSMQASLEAEAKGKAEALRMKKKLEADINELEIALDHANKANAEAQKNIKRYQQQLKDIQTALEEEQRARDDAREQLGISERRANALQNELEESRTLLEQADRGRRQAEQELADAHEQLNEVSAQNASISAAKRKLESELQTLHSDLDELLNEAKNSEEKAKKAMVDAARLADELRAEQDHAQTQEKLRKALEQQIKELQVRLDEAEANALKGGKKAIQKLEQRVRELENELDGEQRRHADAQKNLRKSERRVKELSFQSEEDRKNHERMQDLVDKLQQKIKTYKRQIEEAEEIAALNLAKFRKAQQELEEAEERADLAEQAISKFRAKGRAGSVGRGASPAPRATSVRPQFDGLAFPPRFDLAPENEF.

Positions 33–82 (DSKKSCWIPDEKEGYLLGEIKATKGDIVSVGLQGGEVRDIKSEKVEKVNP) constitute a Myosin N-terminal SH3-like domain. In terms of domain architecture, Myosin motor spans 86–777 (EKIEDMADMT…VLGQMEEFRD (692 aa)). Residue 179–186 (GESGAGKT) coordinates ATP. The segment at 656–678 (LNSLMTTLRSTQPHFVRCIIPNE) is actin-binding. The IQ domain maps to 780-809 (LGKIMSWMQAWARGYLSRKGFKKLQEQRVA). The stretch at 802 to 1927 (KLQEQRVALK…KFRAKGRAGS (1126 aa)) forms a coiled coil. Disordered stretches follow at residues 1822-1862 (ENEL…NHER) and 1922-1962 (KGRA…ENEF).

It belongs to the TRAFAC class myosin-kinesin ATPase superfamily. Myosin family. As to quaternary structure, muscle myosin is a hexameric protein that consists of 2 heavy chain subunits (MHC), 2 alkali light chain subunits (MLC) and 2 regulatory light chain subunits (MLC-2). Expressed in larval and adult muscles. Isoforms containing exon 9a are expressed in indirect flight muscles, exons 9a and 9b are expressed in jump muscles, exons 9b and 9c are expressed in other larval and adult muscles.

It is found in the cytoplasm. Its subcellular location is the myofibril. Functionally, muscle contraction. This is Myosin heavy chain, muscle (Mhc) from Drosophila melanogaster (Fruit fly).